Reading from the N-terminus, the 79-residue chain is Conotoxin ArMSGL-021 (79 aa).

The N-terminal stretch at 1–20 (MSRLGIMVLTLLLLVFIVTS) is a signal peptide. The propeptide occupies 21–44 (HQDAGEKQATHRGAINFRWRRSLI). Disulfide bonds link C52-C64, C56-C73, and C63-C77. L78 bears the Leucine amide mark.

Belongs to the conotoxin O3 superfamily. As to expression, expressed by the venom duct.

The protein resides in the secreted. This Conus arenatus (Sand-dusted cone) protein is Conotoxin ArMSGL-021.